The following is a 109-amino-acid chain: Antifungal protein ginkbilobin-like protein (109 aa).

One can recognise a Gnk2-homologous domain in the interval 4–109 (TNFVSSACNT…CFIQYEQHSF (106 aa)). Cystine bridges form between Cys-11-Cys-87, Cys-63-Cys-72, and Cys-75-Cys-100. Asn-12 contributes to the alpha-D-mannopyranose binding site. 2 residues coordinate alpha-D-mannopyranose: Arg-94 and Glu-105.

In terms of biological role, exerts antifungal activity through its carbohydrate-binding specificity. This is Antifungal protein ginkbilobin-like protein from Picea abies (Norway spruce).